Reading from the N-terminus, the 350-residue chain is tRNA uridine(34) hydroxylase (350 aa).

One can recognise a Rhodanese domain in the interval 146-240; sequence DDPDAVFIDM…YARRAREQGL (95 aa). Cys-200 functions as the Cysteine persulfide intermediate in the catalytic mechanism. Positions 319–328 are enriched in basic and acidic residues; the sequence is RRRRAGRENG. Positions 319-350 are disordered; that stretch reads RRRRAGRENGNKIFNKSRGRLNSKLSIPDPAE.

Belongs to the TrhO family.

It carries out the reaction uridine(34) in tRNA + AH2 + O2 = 5-hydroxyuridine(34) in tRNA + A + H2O. Its function is as follows. Catalyzes oxygen-dependent 5-hydroxyuridine (ho5U) modification at position 34 in tRNAs. In Salmonella choleraesuis (strain SC-B67), this protein is tRNA uridine(34) hydroxylase.